The sequence spans 351 residues: Foldase protein PrsA 1 (351 aa).

A signal peptide spans 1–22 (MKNSNKLIASVVTLASVMALAA). A lipid anchor (N-palmitoyl cysteine) is attached at Cys-23. The S-diacylglycerol cysteine moiety is linked to residue Cys-23. One can recognise a PpiC domain in the interval 145-240 (TPTMAVEMIT…KKFYIVKVTK (96 aa)). Composition is skewed to low complexity over residues 303-317 (KTKA…SESS) and 326-351 (ESEQ…PAAQ). The tract at residues 303-351 (KTKAASESSTTSESSKAAEENPSESEQTQTSSAEEPTETEAQTQEPAAQ) is disordered.

It belongs to the PrsA family.

It localises to the cell membrane. It catalyses the reaction [protein]-peptidylproline (omega=180) = [protein]-peptidylproline (omega=0). Functionally, plays a major role in protein secretion by helping the post-translocational extracellular folding of several secreted proteins. The protein is Foldase protein PrsA 1 (prsA1) of Streptococcus pyogenes serotype M18 (strain MGAS8232).